The primary structure comprises 313 residues: Fructose-1,6-bisphosphatase class 1 (313 aa).

Mg(2+) is bound by residues Glu-91, Asp-112, Leu-114, and Asp-115. Substrate is bound by residues 115–118, Tyr-223, and Lys-254; that span reads DGSS. Residue Glu-260 coordinates Mg(2+).

Belongs to the FBPase class 1 family. Homotetramer. It depends on Mg(2+) as a cofactor.

It is found in the cytoplasm. The enzyme catalyses beta-D-fructose 1,6-bisphosphate + H2O = beta-D-fructose 6-phosphate + phosphate. It functions in the pathway carbohydrate biosynthesis; gluconeogenesis. The polypeptide is Fructose-1,6-bisphosphatase class 1 (Geobacter sulfurreducens (strain ATCC 51573 / DSM 12127 / PCA)).